A 197-amino-acid chain; its full sequence is Recombination protein RecR (197 aa).

The C4-type zinc-finger motif lies at Cys-57 to Cys-72. Residues Ser-79 to Pro-174 form the Toprim domain.

The protein belongs to the RecR family.

In terms of biological role, may play a role in DNA repair. It seems to be involved in an RecBC-independent recombinational process of DNA repair. It may act with RecF and RecO. This is Recombination protein RecR from Trichlorobacter lovleyi (strain ATCC BAA-1151 / DSM 17278 / SZ) (Geobacter lovleyi).